A 255-amino-acid polypeptide reads, in one-letter code: MTTQLSVNVNKIAVLRNSRGGTDPDVLQAARTCIAAGAHGITVHPRPDQRHIRAGDVLALSALTREHAVEFNIEGNPFAPPRAGYPGLLELCRATRPEQITLVPDGDGQLTSDHGFDFAQDTTQLAELIAAFKAVGSRVSLFVDAGNPDIAGAAALGADRVELYTGPYAHAHASGQTDTALALFADAGRRASAAGLGINAGHDLSQANLGDFLAAVPGVLEVSIGHALIGEALYQGLEATVRAYVDILRGSQVGA.

Positions 8 and 19 each coordinate 3-amino-2-oxopropyl phosphate. His44 acts as the Proton acceptor in catalysis. 2 residues coordinate 1-deoxy-D-xylulose 5-phosphate: Arg46 and His51. The Proton acceptor role is filled by Glu74. Residue Thr111 participates in 1-deoxy-D-xylulose 5-phosphate binding. The active-site Proton donor is the His202. Residues Asp203 and 225–226 (GH) each bind 3-amino-2-oxopropyl phosphate.

Belongs to the PNP synthase family. In terms of assembly, homooctamer; tetramer of dimers.

The protein resides in the cytoplasm. The enzyme catalyses 3-amino-2-oxopropyl phosphate + 1-deoxy-D-xylulose 5-phosphate = pyridoxine 5'-phosphate + phosphate + 2 H2O + H(+). It functions in the pathway cofactor biosynthesis; pyridoxine 5'-phosphate biosynthesis; pyridoxine 5'-phosphate from D-erythrose 4-phosphate: step 5/5. Catalyzes the complicated ring closure reaction between the two acyclic compounds 1-deoxy-D-xylulose-5-phosphate (DXP) and 3-amino-2-oxopropyl phosphate (1-amino-acetone-3-phosphate or AAP) to form pyridoxine 5'-phosphate (PNP) and inorganic phosphate. The protein is Pyridoxine 5'-phosphate synthase of Xanthomonas oryzae pv. oryzae (strain PXO99A).